A 232-amino-acid chain; its full sequence is Megakaryocyte and platelet inhibitory receptor G6b (232 aa).

The first 17 residues, 1 to 17, serve as a signal peptide directing secretion; that stretch reads MALVLQLLPLLLSKVQG. Residues 18–140 are Extracellular-facing; it reads NPEVSLEGNP…GSTHGSEYSK (123 aa). N-linked (GlcNAc...) asparagine glycosylation is found at asparagine 32 and asparagine 112. The helical transmembrane segment at 141 to 161 threads the bilayer; that stretch reads VLIPLLGFGLVLGLGALGLVW. Topologically, residues 162-232 are cytoplasmic; sequence WRRSCVPPSH…DASTVYAVVV (71 aa). Short sequence motifs (ITIM motif) lie at residues 200–205 and 226–231; these read LHYADL and TVYAVV. Tyrosine 202 is modified (phosphotyrosine).

As to quaternary structure, interacts (via ITIM motif) with PTPN6 and PTPN11. Binds to heparin. In terms of processing, N-glycosylated. Post-translationally, may be O-glycosylated. Phosphorylated.

It is found in the cell membrane. Inhibitory receptor that acts as a critical regulator of hematopoietic lineage differentiation, megakaryocyte function and platelet production. Inhibits platelet aggregation and activation by agonists such as ADP and collagen-related peptide. This regulation of megakaryocate function as well as platelet production ann activation is done through the inhibition (via the 2 ITIM motifs) of the receptors CLEC1B and GP6:FcRgamma signaling. Appears to operate in a calcium-independent manner. The protein is Megakaryocyte and platelet inhibitory receptor G6b of Rattus norvegicus (Rat).